Reading from the N-terminus, the 447-residue chain is MNKNTWIVGFTLFAMFFGAGNLIFPPNLGQDSGHFFWPAVIAFCLTGIGLPLLGVIVGALDKQGYVGSLNKISPKFSVIFLIIIYLTIGPLFAIPRTASTSFEMTVTPIAHTNSNLVLFIFTLIYFLVVLYLCINPGKIVDRIGSLLTPLLLITILAMIIKGFVDYSGNAPSHGNQVDYNSAIGSFSKGFTEGYLTMDAIAAIAFSMIVVNAIKATGVKHANQIFKQTVMSGLIAAIALVFIYVSLGFIGNHMNVDNATLKNLTAKYQNVGAYLLTTMAANSFGVFGKYLLGIIVALACLTTACGLIVSVSQYFNRIFPKVSYKAYTIFFTLISFILANLGLNAVISMSVPVLSVIYPIAITVVLLILLARFIPTKPIAQQIPIAVISIVSILSVISTNGWVKMSFIEALPLKQYSLEWFPIAVVATIIGYVVAKFVNQDHIVYQKE.

13 helical membrane-spanning segments follow: residues 6 to 26 (WIVG…IFPP), 40 to 60 (VIAF…VGAL), 74 to 94 (PKFS…LFAI), 116 to 136 (LVLF…CINP), 143 to 163 (IGSL…IKGF), 193 to 213 (GYLT…VNAI), 229 to 249 (VMSG…LGFI), 270 to 287 (VGAY…GVFG), 290 to 310 (LLGI…IVSV), 328 to 348 (IFFT…VISM), 350 to 370 (VPVL…ILLA), 382 to 402 (IPIA…NGWV), and 417 to 437 (LEWF…AKFV).

Belongs to the branched chain amino acid transporter family.

The protein resides in the cell membrane. In terms of biological role, component of the transport system for branched-chain amino acids (leucine, isoleucine and valine), which is coupled to a proton motive force. The polypeptide is Putative branched-chain amino acid carrier protein SH1502 (Staphylococcus haemolyticus (strain JCSC1435)).